A 386-amino-acid polypeptide reads, in one-letter code: Succinate--CoA ligase [ADP-forming] subunit beta (386 aa).

Residues 9–244 form the ATP-grasp domain; the sequence is KHILSRFGVS…YDEEIKEEIE (236 aa). Residues K46, 53 to 55, E99, C102, and E107 each bind ATP; that span reads GRG. Residues N199 and D213 each contribute to the Mg(2+) site. Substrate-binding positions include N264 and 320-322; that span reads GIM.

This sequence belongs to the succinate/malate CoA ligase beta subunit family. In terms of assembly, heterotetramer of two alpha and two beta subunits. Requires Mg(2+) as cofactor.

The catalysed reaction is succinate + ATP + CoA = succinyl-CoA + ADP + phosphate. It catalyses the reaction GTP + succinate + CoA = succinyl-CoA + GDP + phosphate. It functions in the pathway carbohydrate metabolism; tricarboxylic acid cycle; succinate from succinyl-CoA (ligase route): step 1/1. Its function is as follows. Succinyl-CoA synthetase functions in the citric acid cycle (TCA), coupling the hydrolysis of succinyl-CoA to the synthesis of either ATP or GTP and thus represents the only step of substrate-level phosphorylation in the TCA. The beta subunit provides nucleotide specificity of the enzyme and binds the substrate succinate, while the binding sites for coenzyme A and phosphate are found in the alpha subunit. This chain is Succinate--CoA ligase [ADP-forming] subunit beta, found in Ehrlichia canis (strain Jake).